A 159-amino-acid polypeptide reads, in one-letter code: Globin-like protein (159 aa).

Residues 1–152 (MSMNRQEISD…FNAESQTHLK (152 aa)) form the Globin domain. A heme-binding site is contributed by H101.

The protein belongs to the globin family. As to quaternary structure, homodimer. As to expression, expressed mainly in a subset of neuronal cells and in head muscular tissue.

Its subcellular location is the cytoplasm. Its function is as follows. May be a globin and may play a role in oxygen transport. This chain is Globin-like protein (glb-1), found in Caenorhabditis elegans.